Here is a 106-residue protein sequence, read N- to C-terminus: Thioredoxin-like protein YdbP (106 aa).

Residues 1–106 (MKKITTNEQF…VTEFLSEHIS (106 aa)) form the Thioredoxin domain. The cysteines at positions 29 and 32 are disulfide-linked.

The protein belongs to the thioredoxin family.

In terms of biological role, participates in various redox reactions through the reversible oxidation of its active center dithiol to a disulfide and catalyzes dithiol-disulfide exchange reactions. The sequence is that of Thioredoxin-like protein YdbP (ydbP) from Bacillus subtilis (strain 168).